Consider the following 67-residue polypeptide: Large ribosomal subunit protein bL35 (67 aa).

Belongs to the bacterial ribosomal protein bL35 family.

The polypeptide is Large ribosomal subunit protein bL35 (Sinorhizobium fredii (strain NBRC 101917 / NGR234)).